The chain runs to 92 residues: UPF0223 protein SPy_1248/M5005_Spy0958 (92 aa).

Belongs to the UPF0223 family.

The sequence is that of UPF0223 protein SPy_1248/M5005_Spy0958 from Streptococcus pyogenes serotype M1.